Here is a 639-residue protein sequence, read N- to C-terminus: Lipoteichoic acid synthase 1 (639 aa).

The Cytoplasmic portion of the chain corresponds to 1 to 3; the sequence is MKK. Residues 4–24 traverse the membrane as a helical segment; it reads LFSYKLSFFVLAVILFWAKTY. Residues 25 to 41 are Extracellular-facing; the sequence is LSYKTEFNLGVKGTTQE. A helical membrane pass occupies residues 42–62; sequence ILLIFNPFSSAVFFLGLALLA. Residues 63–67 lie on the Cytoplasmic side of the membrane; the sequence is KGRKS. A helical membrane pass occupies residues 68 to 88; that stretch reads AIIMLIIDFLMTFVLYANILF. Over 89–116 the chain is Extracellular; it reads YRFFDDFLTFPNIKQSGNVGNMGDGIFS. A helical transmembrane segment spans residues 117-137; sequence IMAGHDIFYFLDIIILIAVLI. Over 138–150 the chain is Cytoplasmic; the sequence is WRPELKEYKMKKR. A helical membrane pass occupies residues 151–171; the sequence is FASLVILSGIALFFINLHYAE. At 172-639 the chain is on the extracellular side; that stretch reads KDRPQLLTRT…YHYGKEKEIK (468 aa). Residues Glu-252 and Thr-297 each contribute to the Mn(2+) site. The active site involves Thr-297. His-413 is a binding site for substrate. Mn(2+)-binding residues include Asp-472 and His-473.

This sequence belongs to the LTA synthase family. Post-translationally, proteolytically cleaved by the type I signal peptidases SipT and SipV.

It is found in the cell membrane. It localises to the secreted. It functions in the pathway cell wall biogenesis; lipoteichoic acid biosynthesis. Its function is as follows. Catalyzes the polymerization of lipoteichoic acid (LTA) polyglycerol phosphate, a reaction that presumably uses phosphatidylglycerol (PG) as substrate. The polypeptide is Lipoteichoic acid synthase 1 (ltaS1) (Bacillus subtilis (strain 168)).